The sequence spans 127 residues: uncharacterized protein (127 aa).

This is an uncharacterized protein from Haemophilus influenzae (strain ATCC 51907 / DSM 11121 / KW20 / Rd).